A 189-amino-acid chain; its full sequence is Peptidyl-tRNA hydrolase (189 aa).

Tyrosine 15 lines the tRNA pocket. Catalysis depends on histidine 20, which acts as the Proton acceptor. TRNA is bound by residues tyrosine 64, asparagine 66, and asparagine 112.

It belongs to the PTH family. In terms of assembly, monomer.

It localises to the cytoplasm. It carries out the reaction an N-acyl-L-alpha-aminoacyl-tRNA + H2O = an N-acyl-L-amino acid + a tRNA + H(+). Its function is as follows. Hydrolyzes ribosome-free peptidyl-tRNAs (with 1 or more amino acids incorporated), which drop off the ribosome during protein synthesis, or as a result of ribosome stalling. Functionally, catalyzes the release of premature peptidyl moieties from peptidyl-tRNA molecules trapped in stalled 50S ribosomal subunits, and thus maintains levels of free tRNAs and 50S ribosomes. In Sulfurihydrogenibium sp. (strain YO3AOP1), this protein is Peptidyl-tRNA hydrolase.